Consider the following 109-residue polypeptide: Spermidine export protein MdtI (109 aa).

At 1–5 (MAQFE) the chain is on the periplasmic side. Residues 6–26 (WVHAAWLALAIVLEIIANVFL) form a helical membrane-spanning segment. At 27-35 (KFSDGFRRK) the chain is on the cytoplasmic side. Residues 36-56 (IFGLLSLAAVLAAFSALSQAV) form a helical membrane-spanning segment. Topologically, residues 57 to 63 (KGIDLSV) are periplasmic. Residues 64-84 (AYALWGGFGIAATLAAGWILF) form a helical membrane-spanning segment. Topologically, residues 85 to 87 (GQR) are cytoplasmic. Residues 88 to 108 (LNRKGWIGLVLLLAGMIMVKL) form a helical membrane-spanning segment. A109 is a topological domain (periplasmic).

The protein belongs to the drug/metabolite transporter (DMT) superfamily. Small multidrug resistance (SMR) (TC 2.A.7.1) family. MdtI subfamily. In terms of assembly, forms a complex with MdtJ.

The protein resides in the cell inner membrane. In terms of biological role, catalyzes the excretion of spermidine. This is Spermidine export protein MdtI (mdtI) from Escherichia coli O6:H1 (strain CFT073 / ATCC 700928 / UPEC).